The sequence spans 503 residues: UDP-N-acetylmuramoylalanine--D-glutamate ligase (503 aa).

An ATP-binding site is contributed by 129-135 (GTNGKTT).

This sequence belongs to the MurCDEF family.

The protein localises to the cytoplasm. The enzyme catalyses UDP-N-acetyl-alpha-D-muramoyl-L-alanine + D-glutamate + ATP = UDP-N-acetyl-alpha-D-muramoyl-L-alanyl-D-glutamate + ADP + phosphate + H(+). It participates in cell wall biogenesis; peptidoglycan biosynthesis. In terms of biological role, cell wall formation. Catalyzes the addition of glutamate to the nucleotide precursor UDP-N-acetylmuramoyl-L-alanine (UMA). The chain is UDP-N-acetylmuramoylalanine--D-glutamate ligase from Burkholderia multivorans (strain ATCC 17616 / 249).